A 591-amino-acid polypeptide reads, in one-letter code: Mono(ADP-ribosyl)transferase SpvB (591 aa).

The TR mART core domain occupies 373–576; the sequence is PMMGGNSSRP…LRLSDDATAD (204 aa). Catalysis depends on residues Arg-471, Ser-501, and Glu-538.

Belongs to the SpvB family.

Its subcellular location is the secreted. It catalyses the reaction L-arginyl-[protein] + NAD(+) = N(omega)-(ADP-D-ribosyl)-L-arginyl-[protein] + nicotinamide + H(+). In terms of biological role, mono-ADP-ribosylates eukaryotic muscle and non-muscle actin on 'Arg-177'. ADP-ribosylation prevents the polymerization of G-actin to F-actin, causing actin filament depolymerization, destruction of the cytoskeleton and cytotoxicity. Does not possess NAD(+)-glycohydrolase activity, unlike most mART enzymes. This chain is Mono(ADP-ribosyl)transferase SpvB (spvB), found in Salmonella enteritidis.